A 107-amino-acid polypeptide reads, in one-letter code: Large ribosomal subunit protein P2 (107 aa).

The span at 63-83 shows a compositional bias: low complexity; it reads SSVPSGGSAPAAAAPSGGAAP. The disordered stretch occupies residues 63-107; that stretch reads SSVPSGGSAPAAAAPSGGAAPKAEEKKKEEPKEESDDDMGFGLFD. Residues 84-93 are compositionally biased toward basic and acidic residues; sequence KAEEKKKEEP.

Belongs to the eukaryotic ribosomal protein P1/P2 family. P1 and P2 exist as dimers at the large ribosomal subunit. Post-translationally, phosphorylated.

Its function is as follows. Plays an important role in the elongation step of protein synthesis. The polypeptide is Large ribosomal subunit protein P2 (Caenorhabditis elegans).